A 463-amino-acid polypeptide reads, in one-letter code: GTPase Der (463 aa).

2 EngA-type G domains span residues 27–190 and 200–373; these read PVVA…PEVG and RRVA…ASWD. Residues 33–40, 80–84, 142–145, 206–213, 253–257, and 318–321 each bind GTP; these read GRPNVGKS, DTGGW, NKVD, GKPNVGKS, DTAGL, and NKWD. Residues 374–456 form the KH-like domain; sequence TRIATGPLNT…PIRVNVRVRE (83 aa).

It belongs to the TRAFAC class TrmE-Era-EngA-EngB-Septin-like GTPase superfamily. EngA (Der) GTPase family. As to quaternary structure, associates with the 50S ribosomal subunit.

Functionally, GTPase that plays an essential role in the late steps of ribosome biogenesis. The protein is GTPase Der of Mycobacterium bovis (strain ATCC BAA-935 / AF2122/97).